A 914-amino-acid polypeptide reads, in one-letter code: Neuropilin-1 (914 aa).

Residues 1–18 (MDWGLFLHCAALTFTLSR) form the signal peptide. Residues 20-847 (LRSDKCGDTI…PGNVLKTLDP (828 aa)) lie on the Extracellular side of the membrane. Cystine bridges form between cysteine 25-cysteine 52, cysteine 80-cysteine 102, and cysteine 145-cysteine 171. CUB domains are found at residues 25-139 (CGDT…YEVF) and 145-263 (CSRN…YSVS). A glycan (N-linked (GlcNAc...) asparagine) is linked at asparagine 148. Glutamate 193, aspartate 207, and aspartate 248 together coordinate Ca(2+). Cysteine 204 and cysteine 226 are oxidised to a cystine. Asparagine 259 is a glycosylation site (N-linked (GlcNAc...) asparagine). 2 cysteine pairs are disulfide-bonded: cysteine 273–cysteine 422 and cysteine 429–cysteine 581. F5/8 type C domains follow at residues 273 to 422 (CMEP…VYGC) and 429 to 581 (CSGM…LLGC). N-linked (GlcNAc...) asparagine glycosylation occurs at asparagine 520. Serine 610 carries an O-linked (Xyl...) (chondroitin sulfate) serine; alternate glycan. O-linked (Xyl...) (heparan sulfate) serine; alternate glycosylation is present at serine 610. In terms of domain architecture, MAM spans 636-801 (PYNLNCGFGW…NHISQEDCQK (166 aa)). Positions 809-829 (IVEEDPESNQTGFTPSYRTDE) are disordered. A compositionally biased stretch (polar residues) spans 816 to 825 (SNQTGFTPSY). The N-linked (GlcNAc...) asparagine glycan is linked to asparagine 817. Residues 848 to 870 (ILITIIAMSALGVLLGAICGVVL) traverse the membrane as a helical segment. The Cytoplasmic segment spans residues 871 to 914 (YCACWHNGMSERNLSALENYNFELVDGVKLKKDKLNTQNSYSEA).

This sequence belongs to the neuropilin family. As to quaternary structure, homodimer, and heterodimer. In terms of tissue distribution, developing nervous system; optic tectum (layers D and E of SGFS), amacrine cells of retina, neurites of dorsal root ganglia. Also expressed in non-neuronal cells, e.g. blood vessels in the entire embryo.

It localises to the mitochondrion membrane. The protein localises to the cell membrane. In terms of biological role, receptor involved in the development of the cardiovascular system, in angiogenesis, in the formation of certain neuronal circuits and in organogenesis outside the nervous system. Mediates the chemorepulsant activity of semaphorins. Binding to VEGFA initiates a signaling pathway needed for motor neuron axon guidance and cell body migration, including for the caudal migration of facial motor neurons from rhombomere 4 to rhombomere 6 during embryonic development. Regulates mitochondrial iron transport via interaction. This Gallus gallus (Chicken) protein is Neuropilin-1 (NRP1).